A 170-amino-acid chain; its full sequence is Small ribosomal subunit protein bS16 (170 aa).

The interval 114 to 170 (EGGPTTEAAKPKKKAATSGAKKAAKAAEPEAAAPEAAEPEAAAPAEGGEQAESSTES) is disordered. Low complexity predominate over residues 142–170 (PEAAAPEAAEPEAAAPAEGGEQAESSTES).

This sequence belongs to the bacterial ribosomal protein bS16 family.

In Mycobacterium avium (strain 104), this protein is Small ribosomal subunit protein bS16.